The chain runs to 61 residues: Small ribosomal subunit protein uS14B (61 aa).

Zn(2+) is bound by residues cysteine 24, cysteine 27, cysteine 40, and cysteine 43.

It belongs to the universal ribosomal protein uS14 family. Zinc-binding uS14 subfamily. As to quaternary structure, part of the 30S ribosomal subunit. Contacts proteins S3 and S10. Requires Zn(2+) as cofactor.

Functionally, binds 16S rRNA, required for the assembly of 30S particles and may also be responsible for determining the conformation of the 16S rRNA at the A site. The protein is Small ribosomal subunit protein uS14B of Bacillus licheniformis (strain ATCC 14580 / DSM 13 / JCM 2505 / CCUG 7422 / NBRC 12200 / NCIMB 9375 / NCTC 10341 / NRRL NRS-1264 / Gibson 46).